We begin with the raw amino-acid sequence, 88 residues long: MKAIITVVGKDRTGIVAGVSTKIAELGLNIDDITQTVLDEYFTMMAVVSSQESQDFAQLRKEFEAFGETLNVKINIQSSAIFDAMHNL.

The 74-residue stretch at 4-77 folds into the ACT domain; the sequence is IITVVGKDRT…ETLNVKINIQ (74 aa).

It belongs to the UPF0237 family. In terms of assembly, homodimer.

The polypeptide is UPF0237 protein SMU_72 (Streptococcus mutans serotype c (strain ATCC 700610 / UA159)).